Consider the following 357-residue polypeptide: Phosphoribosylformylglycinamidine cyclo-ligase (357 aa).

It belongs to the AIR synthase family.

It is found in the cytoplasm. It carries out the reaction 2-formamido-N(1)-(5-O-phospho-beta-D-ribosyl)acetamidine + ATP = 5-amino-1-(5-phospho-beta-D-ribosyl)imidazole + ADP + phosphate + H(+). The protein operates within purine metabolism; IMP biosynthesis via de novo pathway; 5-amino-1-(5-phospho-D-ribosyl)imidazole from N(2)-formyl-N(1)-(5-phospho-D-ribosyl)glycinamide: step 2/2. In Rhizobium leguminosarum bv. trifolii (strain WSM2304), this protein is Phosphoribosylformylglycinamidine cyclo-ligase.